We begin with the raw amino-acid sequence, 156 residues long: 6,7-dimethyl-8-ribityllumazine synthase (156 aa).

5-amino-6-(D-ribitylamino)uracil is bound by residues Phe-23, 57–59 (AFE), and 81–83 (AII). Residue 86–87 (ST) participates in (2S)-2-hydroxy-3-oxobutyl phosphate binding. Residue His-89 is the Proton donor of the active site. Position 114 (Phe-114) interacts with 5-amino-6-(D-ribitylamino)uracil. Residue Arg-128 participates in (2S)-2-hydroxy-3-oxobutyl phosphate binding.

It belongs to the DMRL synthase family.

It carries out the reaction (2S)-2-hydroxy-3-oxobutyl phosphate + 5-amino-6-(D-ribitylamino)uracil = 6,7-dimethyl-8-(1-D-ribityl)lumazine + phosphate + 2 H2O + H(+). It functions in the pathway cofactor biosynthesis; riboflavin biosynthesis; riboflavin from 2-hydroxy-3-oxobutyl phosphate and 5-amino-6-(D-ribitylamino)uracil: step 1/2. Functionally, catalyzes the formation of 6,7-dimethyl-8-ribityllumazine by condensation of 5-amino-6-(D-ribitylamino)uracil with 3,4-dihydroxy-2-butanone 4-phosphate. This is the penultimate step in the biosynthesis of riboflavin. This chain is 6,7-dimethyl-8-ribityllumazine synthase, found in Wolinella succinogenes (strain ATCC 29543 / DSM 1740 / CCUG 13145 / JCM 31913 / LMG 7466 / NCTC 11488 / FDC 602W) (Vibrio succinogenes).